A 979-amino-acid chain; its full sequence is UPF0182 protein MRA_0066 (979 aa).

The next 7 helical transmembrane spans lie at 19–39 (LVTA…LVDI), 63–83 (LAIV…ALLL), 114–134 (LFGW…ASFD), 174–194 (WLFV…YLFG), 211–231 (VQLA…YWLD), 260–280 (KLVL…AIFL), and 288–308 (MAAA…PLLM). The interval 898-948 (GTGRVATARGGDAASAPPPGAGGPAPPQAVPPPRTTQPPAAPPRGPDVPPA) is disordered. Positions 913–946 (APPPGAGGPAPPQAVPPPRTTQPPAAPPRGPDVP) are enriched in pro residues.

The protein belongs to the UPF0182 family.

The protein resides in the cell membrane. The chain is UPF0182 protein MRA_0066 from Mycobacterium tuberculosis (strain ATCC 25177 / H37Ra).